Here is a 526-residue protein sequence, read N- to C-terminus: Fumitremorgin C synthase (526 aa).

Residues 4–24 form a helical membrane-spanning segment; that stretch reads LPLSPAVLFLTITLPILYFWI. Cys443 is a binding site for heme.

This sequence belongs to the cytochrome P450 family. The cofactor is heme.

Its subcellular location is the membrane. It carries out the reaction tryprostatin A + reduced [NADPH--hemoprotein reductase] + O2 = fumitremorgin C + oxidized [NADPH--hemoprotein reductase] + 2 H2O + H(+). It functions in the pathway mycotoxin biosynthesis. In terms of biological role, cytochrome P450 monooxygenase; part of the gene cluster that mediates the biosynthesis of fumitremorgins, indole alkaloids that carry not only intriguing chemical structures, but also interesting biological and pharmacological activities. The biosynthesis of fumitremorgin-type alkaloids begins by condensation of the two amino acids L-tryptophan and L-proline to brevianamide F, catalyzed by the non-ribosomal peptide synthetase ftmPS/ftmA. Brevianamide F is then prenylated by the prenyltransferase ftmPT1/ftmB in the presence of dimethylallyl diphosphate, resulting in the formation of tryprostatin B. The three cytochrome P450 monooxygenases, ftmP450-1/ftmC, ftmP450-2/ftmE and ftmP450-3/FtmG, are responsible for the conversion of tryprostatin B to 6-hydroxytryprostatin B, tryprostatin A to fumitremorgin C and fumitremorgin C to 12,13-dihydroxyfumitremorgin C, respectively. The putative methyltransferase ftmMT/ftmD is expected for the conversion of 6-hydroxytryprostatin B to tryprostatin A. FtmPT2/FtmH catalyzes the prenylation of 12,13-dihydroxyfumitre-morgin C in the presence of dimethylallyl diphosphate, resulting in the formation of fumitremorgin B. Fumitremorgin B is further converted to verruculogen by ftmOx1/ftmF via the insertion of an endoperoxide bond between the two prenyl moieties. Finally, verruculogen is further converted to fumitremorgin A by the verruculogen prenyltransferase ftmPT3. This Neosartorya fischeri (strain ATCC 1020 / DSM 3700 / CBS 544.65 / FGSC A1164 / JCM 1740 / NRRL 181 / WB 181) (Aspergillus fischerianus) protein is Fumitremorgin C synthase.